Reading from the N-terminus, the 338-residue chain is tRNA (cytosine(34)-C(5))-methyltransferase, mitochondrial (338 aa).

S-adenosyl-L-methionine contacts are provided by residues 140 to 146, Glu163, Asp194, and Asp212; that span reads CAAPGGK. The Nucleophile role is filled by Cys266.

Belongs to the class I-like SAM-binding methyltransferase superfamily. RsmB/NOP family.

The protein resides in the mitochondrion matrix. The catalysed reaction is cytidine(34) in mitochondrial tRNA + S-adenosyl-L-methionine = 5-methylcytidine(34) in mitochondrial tRNA + S-adenosyl-L-homocysteine + H(+). Mitochondrial tRNA methyltransferase that mediates methylation of cytosine to 5-methylcytosine (m5C) at position 34 of mt-tRNA(Met). mt-tRNA(Met) methylation at cytosine(34) takes place at the wobble position of the anticodon and initiates the formation of 5-formylcytosine (f(5)c) at this position. mt-tRNA(Met) containing the f(5)c modification at the wobble position enables recognition of the AUA codon in addition to the AUG codon, expanding codon recognition in mitochondrial translation. This is tRNA (cytosine(34)-C(5))-methyltransferase, mitochondrial from Bos taurus (Bovine).